The chain runs to 229 residues: MKFSVLTLFPQLVLPYFEDSILKRALEKNLFELEVLNLRDFSANKHQKADHTLIGGGAGQILDPEMVENALHSVKNPKHTIFLSAVGKPFKQTDAMRLAQKKHVVLVCGRYEGFDERSIELGADEVFCIGDFILTGGELGALCLIDSIARHIQGVLGNAQSLENESFENHYLEAPNFANAVFKSKEINKIPAPLEYSKGNHARIKRLKLDLSKLRTKFYRLDLFKQHKS.

S-adenosyl-L-methionine-binding positions include glycine 109 and 129 to 134 (IGDFIL).

This sequence belongs to the RNA methyltransferase TrmD family. Homodimer.

The protein resides in the cytoplasm. The catalysed reaction is guanosine(37) in tRNA + S-adenosyl-L-methionine = N(1)-methylguanosine(37) in tRNA + S-adenosyl-L-homocysteine + H(+). Specifically methylates guanosine-37 in various tRNAs. The chain is tRNA (guanine-N(1)-)-methyltransferase from Helicobacter pylori (strain Shi470).